Consider the following 202-residue polypeptide: Protein GrpE 1 (202 aa).

The protein belongs to the GrpE family. In terms of assembly, homodimer.

It is found in the cytoplasm. Functionally, participates actively in the response to hyperosmotic and heat shock by preventing the aggregation of stress-denatured proteins, in association with DnaK and GrpE. It is the nucleotide exchange factor for DnaK and may function as a thermosensor. Unfolded proteins bind initially to DnaJ; upon interaction with the DnaJ-bound protein, DnaK hydrolyzes its bound ATP, resulting in the formation of a stable complex. GrpE releases ADP from DnaK; ATP binding to DnaK triggers the release of the substrate protein, thus completing the reaction cycle. Several rounds of ATP-dependent interactions between DnaJ, DnaK and GrpE are required for fully efficient folding. This is Protein GrpE 1 from Buchnera aphidicola subsp. Schizaphis graminum (strain Sg).